The primary structure comprises 75 residues: DNA-directed RNA polymerase subunit omega (75 aa).

The protein belongs to the RNA polymerase subunit omega family. As to quaternary structure, in cyanobacteria the RNAP catalytic core is composed of 2 alpha, 1 beta, 1 beta', 1 gamma and 1 omega subunit. When a sigma factor is associated with the core the holoenzyme is formed, which can initiate transcription.

It carries out the reaction RNA(n) + a ribonucleoside 5'-triphosphate = RNA(n+1) + diphosphate. Functionally, promotes RNA polymerase assembly. Latches the N- and C-terminal regions of the beta' subunit thereby facilitating its interaction with the beta and alpha subunits. This chain is DNA-directed RNA polymerase subunit omega, found in Prochlorococcus marinus (strain MIT 9313).